Reading from the N-terminus, the 344-residue chain is MTDSLTLLRPDDWHIHLRDGTALETTVPHAAASFARAIIMPNLVPPVTNAEEALAYRARIEAQIPAETPFEPLMVLYLTNNTTPETIAAAKAAGVVACKLYPAGATTNSASGVTDIQHIYPALEEMERQGVLLLLHGEVTDSAIDIFDREAVFIERTLRKVVADFPKLKIVLEHITTQQAAEFVAQAPDNVAATITAHHLLYNRNHMLAGGIRPHYYCLPILKRQTHQQALVAAATSGSPKFFLGTDSAPHAKSRKEAACGCAGSYTAFAAIELYAEAFEDAGALDRLEGFASHFGPDFYGLPRNSDTITLRREPWSVPDTLTFGDESLVPVKAGETLNWRVQK.

Positions 14 and 16 each coordinate Zn(2+). Substrate is bound by residues 16-18 (HLR) and Asn-42. Zn(2+) contacts are provided by Lys-99, His-136, and His-174. Lys-99 carries the N6-carboxylysine modification. Residue His-136 coordinates substrate. Leu-219 contacts substrate. Asp-247 is a Zn(2+) binding site. Asp-247 is a catalytic residue. Residues His-251 and Ala-263 each coordinate substrate.

Belongs to the metallo-dependent hydrolases superfamily. DHOase family. Class II DHOase subfamily. In terms of assembly, homodimer. It depends on Zn(2+) as a cofactor.

The enzyme catalyses (S)-dihydroorotate + H2O = N-carbamoyl-L-aspartate + H(+). It functions in the pathway pyrimidine metabolism; UMP biosynthesis via de novo pathway; (S)-dihydroorotate from bicarbonate: step 3/3. In terms of biological role, catalyzes the reversible cyclization of carbamoyl aspartate to dihydroorotate. The sequence is that of Dihydroorotase from Teredinibacter turnerae (strain ATCC 39867 / T7901).